The chain runs to 168 residues: Transcription antitermination protein NusB (168 aa).

Belongs to the NusB family.

Involved in transcription antitermination. Required for transcription of ribosomal RNA (rRNA) genes. Binds specifically to the boxA antiterminator sequence of the ribosomal RNA (rrn) operons. In Prosthecochloris aestuarii (strain DSM 271 / SK 413), this protein is Transcription antitermination protein NusB.